The sequence spans 938 residues: Collagen alpha-1(I) chain (938 aa).

A disordered region spans residues 1–938 (GGISVPGPMG…PGPPGPPGPP (938 aa)). 11 positions are modified to 4-hydroxyproline: Pro18, Pro21, Pro24, Pro33, Pro36, Pro39, Pro54, Pro69, Pro75, Pro84, and Pro90. Low complexity predominate over residues 26-45 (PQGFQGPPGEPGEPGASGPM). Positions 57-71 (NGDDGEAGKPGRPGE) are enriched in basic and acidic residues. Residue Lys93 is modified to 5-hydroxylysine; alternate. An O-linked (Gal...) hydroxylysine; alternate glycan is attached at Lys93. The residue at position 99 (Ser99) is a Phosphoserine. Positions 107-135 (DAGPAGPKGRPGASGPAGARGNDGATGAA) are enriched in low complexity. 12 positions are modified to 4-hydroxyproline: Pro117, Pro138, Pro147, Pro150, Pro177, Pro180, Pro192, Pro198, Pro207, Pro213, Pro216, and Pro231. The span at 137–149 (PPGPTGPAGPPGF) shows a compositional bias: pro residues. Residues 183–222 (AGAAGPAGNPGADGQPGAKGANGAPGIAGAPGFPGARGPS) show a composition bias toward low complexity. Residue Lys234 is modified to 5-hydroxylysine. A 4-hydroxyproline mark is found at Pro240, Pro243, Pro255, Pro264, Pro279, Pro285, Pro294, and Pro300. The span at 289 to 298 (GERGGPGSRG) shows a compositional bias: gly residues. Residue Lys309 is modified to 5-hydroxylysine. Residues Pro314, Pro323, Pro329, Pro335, Pro344, Pro347, Pro356, Pro365, Pro371, Pro383, Pro392, Pro401, Pro404, Pro422, Pro439, Pro445, Pro451, Pro458, Pro464, Pro476, Pro485, Pro497, Pro503, Pro509, and Pro518 each carry the 4-hydroxyproline modification. Positions 338–364 (KGLTGSPGSPGPDGKTGPPGPAGQDGR) are enriched in low complexity. A compositionally biased stretch (low complexity) spans 373–392 (ARGQAGVMGFPGPKGAAGEP). Lys530 bears the 5-hydroxylysine mark. A 4-hydroxyproline mark is found at Pro536, Pro551, and Pro557. The segment covering 563 to 577 (SGPSGPAGPTGARGA) has biased composition (low complexity). At Ser566 the chain carries Phosphoserine. 4-hydroxyproline is present on residues Pro578, Pro584, Pro587, Pro596, Pro602, Pro620, Pro629, and Pro638. Over residues 590–617 (AGFAGPPGADGQPGAKGEPGDAGAKGDA) the composition is skewed to low complexity. A compositionally biased stretch (pro residues) spans 619–631 (PPGPAGPTGPPGP). Lys641 carries the post-translational modification 5-hydroxylysine. Positions 646–662 (SAGPPGATGFPGAAGRV) are enriched in low complexity. 2 positions are modified to 4-hydroxyproline: Pro650 and Pro656. Pro664 carries the 3-hydroxyproline modification. 4-hydroxyproline occurs at positions 665, 674, 677, 693, 703, 712, 730, 739, 742, 748, 763, 769, 775, 784, and 790. The span at 762 to 772 (PPGPMGPPGLA) shows a compositional bias: pro residues. Residue Lys799 is modified to 5-hydroxylysine. Positions 807–822 (PGPPGAPGAPGAPGPV) are enriched in pro residues. 3 positions are modified to 4-hydroxyproline: Pro810, Pro813, and Pro816. A compositionally biased stretch (low complexity) spans 843–867 (AGPAGARGPAGPQGPRRGFSGLQGP). Residues Pro871, Pro874, Pro892, and Pro907 each carry the 4-hydroxyproline modification. Residues 874–907 (PGEQGPSGASGPAGPRGPPGSAGSPGKDGLNGLP) are compositionally biased toward low complexity. 3-hydroxyproline is present on Pro912. A 4-hydroxyproline modification is found at Pro913. The span at 923–938 (VGPPGPPGPPGPPGPP) shows a compositional bias: pro residues. A 3-hydroxyproline modification is found at Pro925. 4-hydroxyproline is present on Pro926. 3-hydroxyproline is present on Pro928. Residue Pro929 is modified to 4-hydroxyproline. A 3-hydroxyproline modification is found at Pro931. A 4-hydroxyproline mark is found at Pro932, Pro935, and Pro938.

Belongs to the fibrillar collagen family. In terms of assembly, trimers of one alpha 2(I) and two alpha 1(I) chains. Contains mostly 4-hydroxyproline. Proline residues at the third position of the tripeptide repeating unit (G-X-Y) are hydroxylated in some or all of the chains. Post-translationally, contains 3-hydroxyproline at a few sites. This modification occurs on the first proline residue in the sequence motif Gly-Pro-Hyp, where Hyp is 4-hydroxyproline. In terms of processing, lysine residues at the third position of the tripeptide repeating unit (G-X-Y) are 5-hydroxylated in some or all of the chains. O-glycosylated on hydroxylated lysine residues. The O-linked glycan consists of a Glc-Gal disaccharide. In terms of tissue distribution, expressed in bones.

The protein resides in the secreted. It localises to the extracellular space. The protein localises to the extracellular matrix. Type I collagen is a member of group I collagen (fibrillar forming collagen). The sequence is that of Collagen alpha-1(I) chain from Megalonyx jeffersonii (Jefferson's ground sloth).